The following is a 199-amino-acid chain: NADH-quinone oxidoreductase subunit C (199 aa).

The protein belongs to the complex I 30 kDa subunit family. In terms of assembly, NDH-1 is composed of 14 different subunits. Subunits NuoB, C, D, E, F, and G constitute the peripheral sector of the complex.

Its subcellular location is the cell inner membrane. The catalysed reaction is a quinone + NADH + 5 H(+)(in) = a quinol + NAD(+) + 4 H(+)(out). In terms of biological role, NDH-1 shuttles electrons from NADH, via FMN and iron-sulfur (Fe-S) centers, to quinones in the respiratory chain. The immediate electron acceptor for the enzyme in this species is believed to be ubiquinone. Couples the redox reaction to proton translocation (for every two electrons transferred, four hydrogen ions are translocated across the cytoplasmic membrane), and thus conserves the redox energy in a proton gradient. The protein is NADH-quinone oxidoreductase subunit C of Rhodopseudomonas palustris (strain BisB18).